We begin with the raw amino-acid sequence, 150 residues long: MQIILLEKVVNLGNLGDIVKVKDGYARNFLIPNKQARRATKEALAEFEVRRAELEKVAAEKLAAAQAQGEKLAGSTVQINQKAGVDGRLFGSVTNADIAEALVKQGFAVEKAQVRLPEGPLKLVGEHAVQISLHTDVLVDVTVAVIGEHV.

It belongs to the bacterial ribosomal protein bL9 family.

In terms of biological role, binds to the 23S rRNA. This chain is Large ribosomal subunit protein bL9, found in Paraburkholderia xenovorans (strain LB400).